A 794-amino-acid polypeptide reads, in one-letter code: Inactive zinc metalloprotease C354.09c (794 aa).

Residues 1–56 (MTDEKHVYVPPPKDPPSYEEVALHSALNNSAPPNDGEQNETSMEEMEIIEPPSEDS) are disordered. The helical transmembrane segment at 91-111 (IPFQFLYLAVIATVIILASYY) threads the bilayer.

This sequence belongs to the peptidase M28 family. M28B subfamily.

The protein localises to the membrane. The polypeptide is Inactive zinc metalloprotease C354.09c (Schizosaccharomyces pombe (strain 972 / ATCC 24843) (Fission yeast)).